The sequence spans 256 residues: MNNIWWQTKGQGNVHLVLLHGWGLNAEVWRCIDEELSSHFTLHLVDLPGFGRSQGFGALSLADMAEAVLQQAPDKAIWLGWSLGGLVASQIALTHPERVQALVTVASSPCFSARDDWPGIKPDVLAGFQQQLSDDFQRTVERFLALQTMGTETARQDARALKKTVLALPMPEVDVLNGGLEILKTVDLRQPLQNVPMPFLRLYGYLDGLVPRKVVPMLDKLWPRSKSYIFAKAAHAPFISHPVEFCHLLVALKQRL.

Residues H15–P242 enclose the AB hydrolase-1 domain. Substrate is bound by residues W22, S82–L83, and F143–Q147. The active-site Nucleophile is S82. Residues D207 and H235 contribute to the active site. H235 serves as a coordination point for substrate.

The protein belongs to the AB hydrolase superfamily. Carboxylesterase BioH family. Monomer.

It localises to the cytoplasm. The catalysed reaction is 6-carboxyhexanoyl-[ACP] methyl ester + H2O = 6-carboxyhexanoyl-[ACP] + methanol + H(+). It functions in the pathway cofactor biosynthesis; biotin biosynthesis. Its function is as follows. The physiological role of BioH is to remove the methyl group introduced by BioC when the pimeloyl moiety is complete. It allows to synthesize pimeloyl-ACP via the fatty acid synthetic pathway through the hydrolysis of the ester bonds of pimeloyl-ACP esters. The sequence is that of Pimeloyl-[acyl-carrier protein] methyl ester esterase from Shigella boydii serotype 4 (strain Sb227).